Reading from the N-terminus, the 466-residue chain is UDP-N-acetylmuramoylalanine--D-glutamate ligase (466 aa).

Position 115-121 (Gly115–Thr121) interacts with ATP.

The protein belongs to the MurCDEF family.

The protein resides in the cytoplasm. It catalyses the reaction UDP-N-acetyl-alpha-D-muramoyl-L-alanine + D-glutamate + ATP = UDP-N-acetyl-alpha-D-muramoyl-L-alanyl-D-glutamate + ADP + phosphate + H(+). It participates in cell wall biogenesis; peptidoglycan biosynthesis. Its function is as follows. Cell wall formation. Catalyzes the addition of glutamate to the nucleotide precursor UDP-N-acetylmuramoyl-L-alanine (UMA). This chain is UDP-N-acetylmuramoylalanine--D-glutamate ligase, found in Chlorobium phaeobacteroides (strain BS1).